Consider the following 226-residue polypeptide: Ribonuclease 3 (226 aa).

The RNase III domain maps to 5 to 127; that stretch reads LERLQRALGY…IIGAIYLDAG (123 aa). Glu-40 is a Mg(2+) binding site. Residue Asp-44 is part of the active site. Positions 113 and 116 each coordinate Mg(2+). Glu-116 is a catalytic residue. Positions 154–224 constitute a DRBM domain; that stretch reads DSKTRLQEYL…AKQALLALGV (71 aa).

Belongs to the ribonuclease III family. Homodimer. The cofactor is Mg(2+).

It is found in the cytoplasm. The catalysed reaction is Endonucleolytic cleavage to 5'-phosphomonoester.. Digests double-stranded RNA. Involved in the processing of primary rRNA transcript to yield the immediate precursors to the large and small rRNAs (23S and 16S). Processes some mRNAs, and tRNAs when they are encoded in the rRNA operon. Processes pre-crRNA and tracrRNA of type II CRISPR loci if present in the organism. The polypeptide is Ribonuclease 3 (Hahella chejuensis (strain KCTC 2396)).